The chain runs to 267 residues: Indole-3-glycerol phosphate synthase (267 aa).

The protein belongs to the TrpC family.

It catalyses the reaction 1-(2-carboxyphenylamino)-1-deoxy-D-ribulose 5-phosphate + H(+) = (1S,2R)-1-C-(indol-3-yl)glycerol 3-phosphate + CO2 + H2O. Its pathway is amino-acid biosynthesis; L-tryptophan biosynthesis; L-tryptophan from chorismate: step 4/5. The sequence is that of Indole-3-glycerol phosphate synthase from Verminephrobacter eiseniae (strain EF01-2).